A 197-amino-acid chain; its full sequence is Probable GTP-binding protein EngB (197 aa).

Positions 25-197 constitute an EngB-type G domain; it reads SAPEIAFAGR…VRDEFFKFTR (173 aa). Residues 33 to 40, 60 to 64, 79 to 82, 146 to 149, and 177 to 179 each bind GTP; these read GRSNVGKS, GCTRQ, DLPG, TKID, and MSI. S40 and T62 together coordinate Mg(2+).

It belongs to the TRAFAC class TrmE-Era-EngA-EngB-Septin-like GTPase superfamily. EngB GTPase family. Requires Mg(2+) as cofactor.

Functionally, necessary for normal cell division and for the maintenance of normal septation. This Wolbachia pipientis wMel protein is Probable GTP-binding protein EngB.